The chain runs to 401 residues: Dual-specificity RNA methyltransferase RlmN (401 aa).

E114 (proton acceptor) is an active-site residue. Positions 120-365 (DKGRGTLCVS…TIVRRTRGDD (246 aa)) constitute a Radical SAM core domain. An intrachain disulfide couples C127 to C370. Positions 134, 138, and 141 each coordinate [4Fe-4S] cluster. S-adenosyl-L-methionine-binding positions include 187-188 (GE), S219, 241-243 (SLH), and N327. C370 (S-methylcysteine intermediate) is an active-site residue.

Belongs to the radical SAM superfamily. RlmN family. [4Fe-4S] cluster is required as a cofactor.

The protein localises to the cytoplasm. It carries out the reaction adenosine(2503) in 23S rRNA + 2 reduced [2Fe-2S]-[ferredoxin] + 2 S-adenosyl-L-methionine = 2-methyladenosine(2503) in 23S rRNA + 5'-deoxyadenosine + L-methionine + 2 oxidized [2Fe-2S]-[ferredoxin] + S-adenosyl-L-homocysteine. It catalyses the reaction adenosine(37) in tRNA + 2 reduced [2Fe-2S]-[ferredoxin] + 2 S-adenosyl-L-methionine = 2-methyladenosine(37) in tRNA + 5'-deoxyadenosine + L-methionine + 2 oxidized [2Fe-2S]-[ferredoxin] + S-adenosyl-L-homocysteine. In terms of biological role, specifically methylates position 2 of adenine 2503 in 23S rRNA and position 2 of adenine 37 in tRNAs. m2A2503 modification seems to play a crucial role in the proofreading step occurring at the peptidyl transferase center and thus would serve to optimize ribosomal fidelity. The protein is Dual-specificity RNA methyltransferase RlmN of Xanthomonas oryzae pv. oryzae (strain MAFF 311018).